We begin with the raw amino-acid sequence, 225 residues long: Uracil-DNA glycosylase (225 aa).

The active-site Proton acceptor is the aspartate 65.

This sequence belongs to the uracil-DNA glycosylase (UDG) superfamily. UNG family.

It localises to the cytoplasm. It carries out the reaction Hydrolyzes single-stranded DNA or mismatched double-stranded DNA and polynucleotides, releasing free uracil.. In terms of biological role, excises uracil residues from the DNA which can arise as a result of misincorporation of dUMP residues by DNA polymerase or due to deamination of cytosine. The polypeptide is Uracil-DNA glycosylase (Bacillus cereus (strain AH820)).